The sequence spans 51 residues: Cytochrome b559 subunit beta (51 aa).

Residues 26 to 42 form a helical membrane-spanning segment; sequence WLAVHALTVPTIFFLGA. His-30 contacts heme.

It belongs to the PsbE/PsbF family. Heterodimer of an alpha subunit and a beta subunit. PSII is composed of 1 copy each of membrane proteins PsbA, PsbB, PsbC, PsbD, PsbE, PsbF, PsbH, PsbI, PsbJ, PsbK, PsbL, PsbM, PsbT, PsbX, Psb30/Ycf12, peripheral proteins PsbO, CyanoQ (PsbQ), PsbU, PsbV and a large number of cofactors. It forms dimeric complexes. Heme b is required as a cofactor.

Its subcellular location is the cell inner membrane. This b-type cytochrome is tightly associated with the reaction center of photosystem II (PSII). PSII is a light-driven water:plastoquinone oxidoreductase that uses light energy to abstract electrons from H(2)O, generating O(2) and a proton gradient subsequently used for ATP formation. It consists of a core antenna complex that captures photons, and an electron transfer chain that converts photonic excitation into a charge separation. The sequence is that of Cytochrome b559 subunit beta from Gloeobacter violaceus (strain ATCC 29082 / PCC 7421).